The primary structure comprises 1202 residues: Phospholipid-transporting ATPase 10 (1202 aa).

The Cytoplasmic portion of the chain corresponds to 1–73 (MAGPSRRRRR…STKYTVASFF (73 aa)). Residues 74 to 95 (PKSLFEQFRRVANFYFLVTGIL) form a helical membrane-spanning segment. At 96–99 (SLTD) the chain is on the extracellular side. A helical transmembrane segment spans residues 100 to 122 (LSPYGAVSALLPLALVISATMVK). At 123 to 305 (EGIEDWRRKQ…SRIERTMDKI (183 aa)) the chain is on the cytoplasmic side. Residues 306–327 (IYLMFGLVFLMSFVGSIIFGVE) form a helical membrane-spanning segment. The Extracellular segment spans residues 328–364 (TREDKVKNGRTERWYLKPDDADIFFDPERAPMAAIYH). The chain crosses the membrane as a helical span at residues 365 to 382 (FFTATMLYSYFIPISLYV). Over 383–920 (SIEIVKVLQS…HGHWCYSRIA (538 aa)) the chain is Cytoplasmic. D430 functions as the 4-aspartylphosphate intermediate in the catalytic mechanism. Mg(2+) is bound by residues D865 and D869. Residues 921 to 940 (SMICYFFYKNITFGVTVFLY) traverse the membrane as a helical segment. Over 941-954 (EAYTSFSGQPAYND) the chain is Extracellular. A helical membrane pass occupies residues 955-974 (WFLSLFNVFFSSLPVIALGV). Residues 975-1004 (FDQDVSARFCYKFPLLYQEGVQNILFSWKR) lie on the Cytoplasmic side of the membrane. The chain crosses the membrane as a helical span at residues 1005–1027 (IIGWMFNGFISALAIFFLCKESL). The Extracellular segment spans residues 1028–1040 (KHQLFDPDGKTAG). Residues 1041 to 1063 (REILGGTMYTCVVWVVNLQMALS) form a helical membrane-spanning segment. Topologically, residues 1064 to 1069 (ISYFTW) are cytoplasmic. A helical membrane pass occupies residues 1070 to 1090 (VQHIVIWGSIAFWYIFLMIYG). Over 1091–1107 (AMTPSFSTDAYMVFLEA) the chain is Extracellular. A helical transmembrane segment spans residues 1108 to 1132 (LAPAPSYWLTTLFVMIFALIPYFVY). At 1133–1202 (KSVQMRFFPK…DQIYKDLVGV (70 aa)) the chain is on the cytoplasmic side.

This sequence belongs to the cation transport ATPase (P-type) (TC 3.A.3) family. Type IV subfamily.

The protein localises to the cell membrane. The enzyme catalyses ATP + H2O + phospholipidSide 1 = ADP + phosphate + phospholipidSide 2.. Its function is as follows. Involved in transport of phospholipids. The polypeptide is Phospholipid-transporting ATPase 10 (Arabidopsis thaliana (Mouse-ear cress)).